Here is a 294-residue protein sequence, read N- to C-terminus: Glycine--tRNA ligase alpha subunit (294 aa).

The protein belongs to the class-II aminoacyl-tRNA synthetase family. In terms of assembly, tetramer of two alpha and two beta subunits.

Its subcellular location is the cytoplasm. The enzyme catalyses tRNA(Gly) + glycine + ATP = glycyl-tRNA(Gly) + AMP + diphosphate. This chain is Glycine--tRNA ligase alpha subunit, found in Sulfurovum sp. (strain NBC37-1).